A 215-amino-acid polypeptide reads, in one-letter code: Peroxiredoxin-5, mitochondrial (215 aa).

The transit peptide at 1-53 directs the protein to the mitochondrion; the sequence is MGLAGVCVLRRSAGYILGGAAGQSVAATAAARRRSEGGWASGGVRSFSRAAAA. Residues 57-215 enclose the Thioredoxin domain; it reads IKVGDAIPAV…SLAPSIISQL (159 aa). An N6-acetyllysine modification is found at Lys76. Lys84 carries the N6-acetyllysine; alternate modification. N6-succinyllysine; alternate is present on Lys84. The active-site Cysteine sulfenic acid (-SOH) intermediate is Cys101. The S-palmitoyl cysteine moiety is linked to residue Cys101. Cys101 and Cys205 form a disulfide bridge. Lys117 carries the N6-succinyllysine modification. A phosphoserine mark is found at Ser172 and Ser183. A Microbody targeting signal motif is present at residues 213-215; the sequence is SQL.

This sequence belongs to the peroxiredoxin family. Prx5 subfamily. In terms of assembly, monomer. In terms of processing, S-palmitoylated. Palmitoylation occurs on the active site, inhibiting its reactivity; therefore PRDX5 palmitoylation status determines its antioxidant capacity. S-palmitoylated. Depalmitoylated by ABHD10.

It localises to the mitochondrion. The protein localises to the cytoplasm. Its subcellular location is the peroxisome matrix. The enzyme catalyses a hydroperoxide + [thioredoxin]-dithiol = an alcohol + [thioredoxin]-disulfide + H2O. In terms of biological role, thiol-specific peroxidase that catalyzes the reduction of hydrogen peroxide and organic hydroperoxides to water and alcohols, respectively. Plays a role in cell protection against oxidative stress by detoxifying peroxides and as sensor of hydrogen peroxide-mediated signaling events. The sequence is that of Peroxiredoxin-5, mitochondrial (PRDX5) from Papio hamadryas (Hamadryas baboon).